Reading from the N-terminus, the 208-residue chain is MFKDYYAILNITPKASAEEIKYAYKKAALETHPDRVSPSARARATEQFQLVNEAYYVLSDNSRRAQYDRESASSSAKPRQSFFSRTNPQPQSQSQQGGPSFGFRQSFSDSQFEQVFNEMMNETSTRGIANAFWTIVGTLAGAALGFITFDVPGVLVGSAAGAKLGRIRDTHGKSAYSVFQDMPAVEKARILTQFLSHLLNSSKQFTSS.

In terms of domain architecture, J spans 4–71 (DYYAILNITP…SRRAQYDRES (68 aa)). Positions 67–100 (YDRESASSSAKPRQSFFSRTNPQPQSQSQQGGPS) are disordered. Positions 72-87 (ASSSAKPRQSFFSRTN) are enriched in polar residues. Over residues 88 to 100 (PQPQSQSQQGGPS) the composition is skewed to low complexity. Residues 127–147 (GIANAFWTIVGTLAGAALGFI) traverse the membrane as a helical segment.

Belongs to the DnaJ family.

It localises to the endoplasmic reticulum membrane. This is an uncharacterized protein from Schizosaccharomyces pombe (strain 972 / ATCC 24843) (Fission yeast).